Consider the following 519-residue polypeptide: MIOREX complex component 12 (519 aa).

The transit peptide at 1-35 (MLRSLHSAATLSNKRFYSLISHSNRKNIIKKLLRH) directs the protein to the mitochondrion.

Associates with the mitochondrial ribosome.

Its subcellular location is the mitochondrion. Its function is as follows. Component of MIOREX complexes, large expressome-like assemblies of ribosomes with factors involved in all the steps of post-transcriptional gene expression. The polypeptide is MIOREX complex component 12 (Saccharomyces cerevisiae (strain ATCC 204508 / S288c) (Baker's yeast)).